We begin with the raw amino-acid sequence, 765 residues long: Protein transport protein sec23-2 (765 aa).

Zn(2+) contacts are provided by cysteine 56, cysteine 60, cysteine 79, and cysteine 82. Phosphoserine is present on residues serine 565 and serine 566.

Belongs to the SEC23/SEC24 family. SEC23 subfamily. In terms of assembly, the COPII coat is composed of at least 5 proteins: the sec23/24 complex, the sec13/31 complex, and the protein sar1.

Its subcellular location is the cytoplasm. The protein resides in the cytoplasmic vesicle. The protein localises to the COPII-coated vesicle membrane. It is found in the endoplasmic reticulum membrane. It localises to the golgi apparatus membrane. In terms of biological role, component of the coat protein complex II (COPII) which promotes the formation of transport vesicles from the endoplasmic reticulum (ER). The coat has two main functions, the physical deformation of the endoplasmic reticulum membrane into vesicles and the selection of cargo molecules. This is Protein transport protein sec23-2 (sec232) from Schizosaccharomyces pombe (strain 972 / ATCC 24843) (Fission yeast).